A 352-amino-acid polypeptide reads, in one-letter code: F-box/kelch-repeat protein At1g57790 (352 aa).

One can recognise an F-box domain in the interval K10 to S56. Kelch repeat units follow at residues V148 to V189 and V190 to G234.

This Arabidopsis thaliana (Mouse-ear cress) protein is F-box/kelch-repeat protein At1g57790.